We begin with the raw amino-acid sequence, 394 residues long: 1-acylglycerol-3-phosphate O-acyltransferase ICT1 (394 aa).

The AB hydrolase-1 domain occupies 74 to 381; sequence VLIHGYAASS…AGHNLFLDNP (308 aa). An HXXXXD motif motif is present at residues 374–379; it reads HNLFLD.

The protein belongs to the peptidase S33 family. ABHD4/ABHD5 subfamily.

The enzyme catalyses a 1-acyl-sn-glycero-3-phosphate + an acyl-CoA = a 1,2-diacyl-sn-glycero-3-phosphate + CoA. In terms of biological role, lysophosphatidic acid acyltransferase involved in membrane remodeling leading to increased organic solvent tolerance. Involved in resistance to azoles and copper. This Saccharomyces cerevisiae (strain ATCC 204508 / S288c) (Baker's yeast) protein is 1-acylglycerol-3-phosphate O-acyltransferase ICT1 (ICT1).